The chain runs to 2997 residues: Chromodomain-helicase-DNA-binding protein 7 (2997 aa).

Residues 86–144 (PNRMMSNTPGNGLASPHSQYHTPPVPQVPHGGSGGGQMGVYPGMQNERHGQSFVDSSSM) form a disordered region. The span at 88 to 106 (RMMSNTPGNGLASPHSQYH) shows a compositional bias: polar residues. R148 carries the post-translational modification Omega-N-methylarginine. 5 disordered regions span residues 160 to 186 (YQQQQPQPQPPQPAPSGPPAQGHPQHM), 199 to 287 (SMQQ…AVRP), 375 to 419 (QMNT…GSAG), 498 to 816 (GQQH…KQKE), and 938 to 959 (REPETERVERPPADDWKKSESS). The span at 166 to 177 (QPQPPQPAPSGP) shows a compositional bias: pro residues. Composition is skewed to polar residues over residues 199-224 (SMQQHGQPQQRMSQFSQGQEGLNQGN) and 238-255 (VPQQSPSMAPSLRHSVQQ). R286 is modified (asymmetric dimethylarginine). Polar residues predominate over residues 375–390 (QMNTQTMHPSQPQGTY). The segment covering 498-510 (GQQHPGQQPSFQQ) has biased composition (low complexity). Basic and acidic residues predominate over residues 607 to 620 (VAEDPSKGFGKDDF). The span at 627–636 (QELNRNSLDG) shows a compositional bias: polar residues. S637 carries the post-translational modification Phosphoserine. Composition is skewed to basic and acidic residues over residues 650–682 (KKDPKEPKEPKEKKEPKEPKTPKAPKIPKEPKE) and 717–729 (GKTEGSENSDLDK). The residue at position 725 (S725) is a Phosphoserine. A compositionally biased stretch (basic residues) spans 746-758 (QKRRSSRQVKRKR). Residues 759-769 (YTEDLEFKISD) are compositionally biased toward basic and acidic residues. Polar residues predominate over residues 782–794 (SPSNTSQSEQQES). Chromo domains are found at residues 800-867 (PVVE…GQNK) and 882-947 (VEVD…RVER). A Helicase ATP-binding domain is found at 980-1154 (LFNWYNMRNC…FSLLHFLEPS (175 aa)). 993-1000 (DEMGLGKT) contacts ATP. Residues 1105–1108 (DEAH) carry the DEAH box motif. The region spanning 1294–1464 (LIDKLLPKLK…LSKKEIEDLL (171 aa)) is the Helicase C-terminal domain. Disordered regions lie at residues 1576–1600 (FSDLESDSEEKPCAKPRRPQDKSQG) and 1837–1863 (DMLADGGDGGEFDREDEDPEYKPTRTP). S1577 and S1581 each carry phosphoserine. Residues 1584-1596 (EEKPCAKPRRPQD) show a composition bias toward basic and acidic residues. Acidic residues predominate over residues 1844–1855 (DGGEFDREDEDP). At S1874 the chain carries Phosphoserine. Basic and acidic residues-rich tracts occupy residues 2170-2189 (QAEGKVEEPENPAAKEKCEG) and 2198-2207 (GSGKESKQEC). The interval 2170–2290 (QAEGKVEEPE…DETRDGFYME (121 aa)) is disordered. Phosphoserine occurs at positions 2231, 2233, 2237, 2251, 2272, 2275, 2356, and 2395. A compositionally biased stretch (acidic residues) spans 2237 to 2251 (SEEDEEEKLEDDDKS). Residues 2401–2431 (RRRRRKIEIEAERAAKRRNLMEMVAQLRESQ) are a coiled coil. A Phosphothreonine modification is found at T2472. A phosphoserine mark is found at S2533 and S2535. T2551 carries the post-translational modification Phosphothreonine. 2 positions are modified to phosphoserine: S2559 and S2619. A compositionally biased stretch (low complexity) spans 2823-2832 (ATGNTTTASS). 2 disordered regions span residues 2823–2872 (ATGN…SANG) and 2935–2997 (EEKA…ENDE). 2 stretches are compositionally biased toward basic and acidic residues: residues 2839–2849 (STSKGEEKGNE) and 2935–2951 (EEKAADKAEGGPFKDGE). Residues S2956 and S2961 each carry the phosphoserine modification. The segment covering 2970–2997 (LLEDEIAQGEELDSLDGGDEIENNENDE) has biased composition (acidic residues).

This sequence belongs to the SNF2/RAD54 helicase family. May interact with CTCF. Interacts with CHD8. Interacts with FAM124B. Found in a complex composed of AGO2, CHD7 and ARB2A. Interacts with TLK2. Widely expressed in fetal and adult tissues.

The protein resides in the nucleus. The protein localises to the nucleolus. It carries out the reaction ATP + H2O = ADP + phosphate + H(+). In terms of biological role, ATP-dependent chromatin-remodeling factor, slides nucleosomes along DNA; nucleosome sliding requires ATP. Probable transcription regulator. May be involved in the in 45S precursor rRNA production. The protein is Chromodomain-helicase-DNA-binding protein 7 (CHD7) of Homo sapiens (Human).